The following is a 123-amino-acid chain: Large ribosomal subunit protein bL12 (123 aa).

It belongs to the bacterial ribosomal protein bL12 family. As to quaternary structure, homodimer. Part of the ribosomal stalk of the 50S ribosomal subunit. Forms a multimeric L10(L12)X complex, where L10 forms an elongated spine to which 2 to 4 L12 dimers bind in a sequential fashion. Binds GTP-bound translation factors.

Functionally, forms part of the ribosomal stalk which helps the ribosome interact with GTP-bound translation factors. Is thus essential for accurate translation. In Haemophilus influenzae (strain 86-028NP), this protein is Large ribosomal subunit protein bL12.